The sequence spans 445 residues: Exodeoxyribonuclease 7 large subunit (445 aa).

This sequence belongs to the XseA family. Heterooligomer composed of large and small subunits.

Its subcellular location is the cytoplasm. The enzyme catalyses Exonucleolytic cleavage in either 5'- to 3'- or 3'- to 5'-direction to yield nucleoside 5'-phosphates.. Functionally, bidirectionally degrades single-stranded DNA into large acid-insoluble oligonucleotides, which are then degraded further into small acid-soluble oligonucleotides. This chain is Exodeoxyribonuclease 7 large subunit, found in Xanthomonas euvesicatoria pv. vesicatoria (strain 85-10) (Xanthomonas campestris pv. vesicatoria).